A 204-amino-acid polypeptide reads, in one-letter code: phospholipase A2 inhibitor and Ly6/PLAUR domain-containing protein (204 aa).

The N-terminal stretch at 1–26 (MRLSRRPETFLLAFVLLCTLLGLGCP) is a signal peptide. In terms of domain architecture, UPAR/Ly6 spans 27–117 (LHCEICTAAG…NSAFLSVPLT (91 aa)). 7 disulfides stabilise this stretch: Cys-29–Cys-53, Cys-32–Cys-39, Cys-46–Cys-74, Cys-80–Cys-101, Cys-102–Cys-107, Cys-126–Cys-151, and Cys-144–Cys-172.

The protein belongs to the CNF-like-inhibitor family.

It localises to the secreted. This Homo sapiens (Human) protein is phospholipase A2 inhibitor and Ly6/PLAUR domain-containing protein (PINLYP).